The primary structure comprises 35 residues: Photosystem II reaction center protein T (35 aa).

A helical transmembrane segment spans residues 3–23; it reads ALVYTFLLVSTLGIIFFAIFF.

Belongs to the PsbT family. PSII is composed of 1 copy each of membrane proteins PsbA, PsbB, PsbC, PsbD, PsbE, PsbF, PsbH, PsbI, PsbJ, PsbK, PsbL, PsbM, PsbT, PsbY, PsbZ, Psb30/Ycf12, at least 3 peripheral proteins of the oxygen-evolving complex and a large number of cofactors. It forms dimeric complexes.

Its subcellular location is the plastid. It localises to the chloroplast thylakoid membrane. Functionally, found at the monomer-monomer interface of the photosystem II (PS II) dimer, plays a role in assembly and dimerization of PSII. PSII is a light-driven water plastoquinone oxidoreductase, using light energy to abstract electrons from H(2)O, generating a proton gradient subsequently used for ATP formation. The chain is Photosystem II reaction center protein T from Suaeda aralocaspica (Seablite).